The chain runs to 129 residues: ATP synthase epsilon chain (129 aa).

This sequence belongs to the ATPase epsilon chain family. F-type ATPases have 2 components, CF(1) - the catalytic core - and CF(0) - the membrane proton channel. CF(1) has five subunits: alpha(3), beta(3), gamma(1), delta(1), epsilon(1). CF(0) has three main subunits: a, b and c.

Its subcellular location is the cell inner membrane. Its function is as follows. Produces ATP from ADP in the presence of a proton gradient across the membrane. The chain is ATP synthase epsilon chain from Campylobacter jejuni subsp. doylei (strain ATCC BAA-1458 / RM4099 / 269.97).